We begin with the raw amino-acid sequence, 839 residues long: LPS-assembly protein LptD (839 aa).

The signal sequence occupies residues 1–21 (MAIGITACVLSLINYQGLAYS).

Belongs to the LptD family. Component of the lipopolysaccharide transport and assembly complex. Interacts with LptE and LptA.

It is found in the cell outer membrane. Functionally, together with LptE, is involved in the assembly of lipopolysaccharide (LPS) at the surface of the outer membrane. In Legionella pneumophila subsp. pneumophila (strain Philadelphia 1 / ATCC 33152 / DSM 7513), this protein is LPS-assembly protein LptD.